The primary structure comprises 153 residues: Histone H2B.10 (153 aa).

Composition is skewed to basic and acidic residues over residues 1-28 (MAPKAEKKPAAKKPAEEEPAAEKAEKAP) and 36-53 (EKRLPAGKAEKSSGEGKK). A disordered region spans residues 1–61 (MAPKAEKKPA…KKAGRKKAKK (61 aa)). An N6-acetyllysine mark is found at lysine 7 and lysine 37. Lysine 149 is covalently cross-linked (Glycyl lysine isopeptide (Lys-Gly) (interchain with G-Cter in ubiquitin)).

This sequence belongs to the histone H2B family. As to quaternary structure, the nucleosome is a histone octamer containing two molecules each of H2A, H2B, H3 and H4 assembled in one H3-H4 heterotetramer and two H2A-H2B heterodimers. The octamer wraps approximately 147 bp of DNA. Post-translationally, can be acetylated to form H2BK6ac and H2BK33ac. In terms of processing, monoubiquitinated by BRE1 to form H2BK143ub1 and deubiquitinated by UBP26. Required for heterochromatic histone H3 di- and trimethylation at H3K4me. May give a specific tag for epigenetic transcriptional activation.

It is found in the nucleus. The protein localises to the chromosome. In terms of biological role, core component of nucleosome. Nucleosomes wrap and compact DNA into chromatin, limiting DNA accessibility to the cellular machineries which require DNA as a template. Histones thereby play a central role in transcription regulation, DNA repair, DNA replication and chromosomal stability. DNA accessibility is regulated via a complex set of post-translational modifications of histones, also called histone code, and nucleosome remodeling. This Oryza sativa subsp. indica (Rice) protein is Histone H2B.10 (H2B.10).